A 169-amino-acid polypeptide reads, in one-letter code: Peptide methionine sulfoxide reductase MsrA (169 aa).

The active site involves C13.

Belongs to the MsrA Met sulfoxide reductase family.

It catalyses the reaction L-methionyl-[protein] + [thioredoxin]-disulfide + H2O = L-methionyl-(S)-S-oxide-[protein] + [thioredoxin]-dithiol. It carries out the reaction [thioredoxin]-disulfide + L-methionine + H2O = L-methionine (S)-S-oxide + [thioredoxin]-dithiol. Has an important function as a repair enzyme for proteins that have been inactivated by oxidation. Catalyzes the reversible oxidation-reduction of methionine sulfoxide in proteins to methionine. This is Peptide methionine sulfoxide reductase MsrA from Mycolicibacterium vanbaalenii (strain DSM 7251 / JCM 13017 / BCRC 16820 / KCTC 9966 / NRRL B-24157 / PYR-1) (Mycobacterium vanbaalenii).